A 434-amino-acid chain; its full sequence is Septin-7 (434 aa).

Residue Tyr-27 is modified to Phosphotyrosine. Positions 44–313 (RGFEFTLMVV…ENYRSRKLAA (270 aa)) constitute a Septin-type G domain. The interaction with SEPTIN12 stretch occupies residues 44–314 (RGFEFTLMVV…NYRSRKLAAV (271 aa)). The segment at 54–61 (GESGLGKS) is G1 motif. 54-61 (GESGLGKS) provides a ligand contact to GTP. Ser-74 is modified (phosphoserine). GTP is bound by residues Thr-87, Gly-113, and 192–200 (KADTLTPEE). The segment at 110–113 (DTPG) is G3 motif. The segment at 191 to 194 (AKAD) is G4 motif. Thr-225 carries the post-translational modification Phosphothreonine. Residues Gly-247 and Arg-262 each coordinate GTP. A coiled-coil region spans residues 329–434 (TKSPLAQMEE…EKNKKKGKIF (106 aa)). Ser-331 is subject to Phosphoserine. Position 370 is an N6-acetyllysine (Lys-370). Over residues 377 to 407 (QRRHEQMKKNLEAQHKGLEEKRRQFEDEKAN) the composition is skewed to basic and acidic residues. The disordered stretch occupies residues 377 to 434 (QRRHEQMKKNLEAQHKGLEEKRRQFEDEKANWEAQQRILEQQNSSRTLEKNKKKGKIF). Ser-421 carries the phosphoserine modification. Position 423 is a phosphothreonine (Thr-423).

This sequence belongs to the TRAFAC class TrmE-Era-EngA-EngB-Septin-like GTPase superfamily. Septin GTPase family. In terms of assembly, septins polymerize into heterooligomeric protein complexes that form filaments, and associate with cellular membranes, actin filaments and microtubules. GTPase activity is required for filament formation. Filaments are assembled from asymmetrical heterotrimers, composed of SEPTIN2, SEPTIN6 and SEPTIN7 that associate head-to-head to form a hexameric unit. Within the trimer, directly interacts with SEPTIN6, while interaction with SEPTIN2 seems indirect. In the absence of SEPTIN6, forms homodimers. Interacts directly with CENPE and links CENPE to septin filaments composed of SEPTIN2, SEPTIN6 and SEPTIN7. Interacts with SEPTIN5, SEPTIN8, SEPTIN9 and SEPTIN11. Component of a septin core octameric complex consisting of SEPTIN12, SEPTIN7, SEPTIN6 and SEPTIN2 or SEPTIN4 in the order 12-7-6-2-2-6-7-12 or 12-7-6-4-4-6-7-12 and located in the sperm annulus; the SEPTIN12:SEPTIN7 association is mediated by the respective GTP-binding domains.

The protein resides in the cytoplasm. It localises to the chromosome. Its subcellular location is the centromere. It is found in the kinetochore. The protein localises to the cytoskeleton. The protein resides in the spindle. It localises to the cleavage furrow. Its subcellular location is the midbody. It is found in the cilium axoneme. The protein localises to the cell projection. The protein resides in the cilium. It localises to the flagellum. Its function is as follows. Filament-forming cytoskeletal GTPase. Required for normal organization of the actin cytoskeleton. Required for normal progress through mitosis. Involved in cytokinesis. Required for normal association of CENPE with the kinetochore. Plays a role in ciliogenesis and collective cell movements. Forms a filamentous structure with SEPTIN12, SEPTIN6, SEPTIN2 and probably SEPTIN4 at the sperm annulus which is required for the structural integrity and motility of the sperm tail during postmeiotic differentiation. The sequence is that of Septin-7 from Pan troglodytes (Chimpanzee).